The sequence spans 233 residues: Mediator of RNA polymerase II transcription subunit 7 (233 aa).

Residue K185 forms a Glycyl lysine isopeptide (Lys-Gly) (interchain with G-Cter in SUMO1); alternate linkage. Residue K185 forms a Glycyl lysine isopeptide (Lys-Gly) (interchain with G-Cter in SUMO2); alternate linkage. The segment at E187–D213 is disordered. S194 is subject to Phosphoserine. Over residues E202–D213 the composition is skewed to basic and acidic residues.

This sequence belongs to the Mediator complex subunit 7 family. In terms of assembly, component of the Mediator complex, which is composed of MED1, MED4, MED6, MED7, MED8, MED9, MED10, MED11, MED12, MED13, MED13L, MED14, MED15, MED16, MED17, MED18, MED19, MED20, MED21, MED22, MED23, MED24, MED25, MED26, MED27, MED29, MED30, MED31, CCNC, CDK8 and CDC2L6/CDK11. The MED12, MED13, CCNC and CDK8 subunits form a distinct module termed the CDK8 module. Mediator containing the CDK8 module is less active than Mediator lacking this module in supporting transcriptional activation. Individual preparations of the Mediator complex lacking one or more distinct subunits have been variously termed ARC, CRSP, DRIP, PC2, SMCC and TRAP. In terms of processing, constitutively sumoylated.

It localises to the nucleus. Its function is as follows. Component of the Mediator complex, a coactivator involved in the regulated transcription of nearly all RNA polymerase II-dependent genes. Mediator functions as a bridge to convey information from gene-specific regulatory proteins to the basal RNA polymerase II transcription machinery. Mediator is recruited to promoters by direct interactions with regulatory proteins and serves as a scaffold for the assembly of a functional preinitiation complex with RNA polymerase II and the general transcription factors. This chain is Mediator of RNA polymerase II transcription subunit 7 (MED7), found in Homo sapiens (Human).